Consider the following 352-residue polypeptide: MAKKKKLTQGQVRRVRDNQQKRLKKQADTIQWDEAMLGDSRRGLVITRFGQHADIEDAETGLIERCNLRRGIESLVSGDKVIWRKGLESMAGISGVVEAVEPRTSVLTRPDYYDGLKPVAANIDQMVIVSSVLPELSLNIIDRYLIAAETLGIEPLLVLNKIDLLQEAELATYREWLADYEKIGYKILYVSKRSGAGIAELEAQLQDRINIFVGQSGVGKSSLVNALIPELDIEEGEISELSGLGQHTTTAARLYHIPSGGNLIDSPGVREFGLWHLEPEEITKAYLEFRPYLGGCKFRDCKHADDPGCIIREAVENGEISEVRYDNYHRIIESMAENKANRQYSRNKKADL.

The tract at residues 1–24 (MAKKKKLTQGQVRRVRDNQQKRLK) is disordered. A CP-type G domain is found at 104–272 (TSVLTRPDYY…LIDSPGVREF (169 aa)). GTP is bound by residues 160–163 (NKID) and 214–222 (GQSGVGKSS). 4 residues coordinate Zn(2+): C296, C301, H303, and C309.

Belongs to the TRAFAC class YlqF/YawG GTPase family. RsgA subfamily. In terms of assembly, monomer. Associates with 30S ribosomal subunit, binds 16S rRNA. Zn(2+) is required as a cofactor.

It localises to the cytoplasm. One of several proteins that assist in the late maturation steps of the functional core of the 30S ribosomal subunit. Helps release RbfA from mature subunits. May play a role in the assembly of ribosomal proteins into the subunit. Circularly permuted GTPase that catalyzes slow GTP hydrolysis, GTPase activity is stimulated by the 30S ribosomal subunit. The sequence is that of Small ribosomal subunit biogenesis GTPase RsgA 1 from Vibrio vulnificus (strain CMCP6).